We begin with the raw amino-acid sequence, 256 residues long: Ubiquinone/menaquinone biosynthesis C-methyltransferase UbiE (256 aa).

Residues threonine 79, aspartate 100, and 128-129 (DA) contribute to the S-adenosyl-L-methionine site.

Belongs to the class I-like SAM-binding methyltransferase superfamily. MenG/UbiE family.

It catalyses the reaction a 2-demethylmenaquinol + S-adenosyl-L-methionine = a menaquinol + S-adenosyl-L-homocysteine + H(+). The catalysed reaction is a 2-methoxy-6-(all-trans-polyprenyl)benzene-1,4-diol + S-adenosyl-L-methionine = a 5-methoxy-2-methyl-3-(all-trans-polyprenyl)benzene-1,4-diol + S-adenosyl-L-homocysteine + H(+). It participates in quinol/quinone metabolism; menaquinone biosynthesis; menaquinol from 1,4-dihydroxy-2-naphthoate: step 2/2. Its pathway is cofactor biosynthesis; ubiquinone biosynthesis. Its function is as follows. Methyltransferase required for the conversion of demethylmenaquinol (DMKH2) to menaquinol (MKH2) and the conversion of 2-polyprenyl-6-methoxy-1,4-benzoquinol (DDMQH2) to 2-polyprenyl-3-methyl-6-methoxy-1,4-benzoquinol (DMQH2). The polypeptide is Ubiquinone/menaquinone biosynthesis C-methyltransferase UbiE (Pseudomonas syringae pv. tomato (strain ATCC BAA-871 / DC3000)).